A 315-amino-acid chain; its full sequence is Glycine--tRNA ligase alpha subunit (315 aa).

Belongs to the class-II aminoacyl-tRNA synthetase family. Tetramer of two alpha and two beta subunits.

The protein localises to the cytoplasm. It carries out the reaction tRNA(Gly) + glycine + ATP = glycyl-tRNA(Gly) + AMP + diphosphate. The sequence is that of Glycine--tRNA ligase alpha subunit from Pseudomonas putida (strain ATCC 47054 / DSM 6125 / CFBP 8728 / NCIMB 11950 / KT2440).